We begin with the raw amino-acid sequence, 497 residues long: Guanosine-5'-triphosphate,3'-diphosphate pyrophosphatase (497 aa).

This sequence belongs to the GppA/Ppx family. GppA subfamily.

It carries out the reaction guanosine 3'-diphosphate 5'-triphosphate + H2O = guanosine 3',5'-bis(diphosphate) + phosphate + H(+). It functions in the pathway purine metabolism; ppGpp biosynthesis; ppGpp from GTP: step 2/2. Functionally, catalyzes the conversion of pppGpp to ppGpp. Guanosine pentaphosphate (pppGpp) is a cytoplasmic signaling molecule which together with ppGpp controls the 'stringent response', an adaptive process that allows bacteria to respond to amino acid starvation, resulting in the coordinated regulation of numerous cellular activities. The polypeptide is Guanosine-5'-triphosphate,3'-diphosphate pyrophosphatase (Vibrio cholerae serotype O1 (strain ATCC 39541 / Classical Ogawa 395 / O395)).